We begin with the raw amino-acid sequence, 197 residues long: Large ribosomal subunit protein uL22 (197 aa).

The segment at 118–197 (ESRPAKDQRS…ETSAAKGGSD (80 aa)) is disordered. Over residues 149-165 (APAKKAAAKAPAKKAPA) the composition is skewed to low complexity. Residues 172 to 183 (TPAKKAPAKKAP) are compositionally biased toward basic residues. The segment covering 184–197 (AKASETSAAKGGSD) has biased composition (low complexity).

This sequence belongs to the universal ribosomal protein uL22 family. As to quaternary structure, part of the 50S ribosomal subunit.

In terms of biological role, this protein binds specifically to 23S rRNA; its binding is stimulated by other ribosomal proteins, e.g. L4, L17, and L20. It is important during the early stages of 50S assembly. It makes multiple contacts with different domains of the 23S rRNA in the assembled 50S subunit and ribosome. The globular domain of the protein is located near the polypeptide exit tunnel on the outside of the subunit, while an extended beta-hairpin is found that lines the wall of the exit tunnel in the center of the 70S ribosome. The protein is Large ribosomal subunit protein uL22 of Mycobacterium bovis (strain ATCC BAA-935 / AF2122/97).